Reading from the N-terminus, the 311-residue chain is Reaction center protein L chain (311 aa).

The next 3 membrane-spanning stretches (helical) occupy residues 68–90 (FWGF…ETIL), 123–151 (GFAW…SMKL), and 156–178 (HVPI…RPIA). Residues H183 and H213 each coordinate (7R,8Z)-bacteriochlorophyll b. A helical membrane pass occupies residues 211–238 (PFHAIGITGLFASTWLLACHGSLILSAA). Position 230 (H230) interacts with Fe cation. F253 is an a ubiquinone binding site. Residues 262–287 (GESGVHRLGYIFAIGGILSADLCILL) traverse the membrane as a helical segment. H267 provides a ligand contact to Fe cation.

This sequence belongs to the reaction center PufL/M/PsbA/D family. In terms of assembly, reaction center is composed of four bacteriochlorophylls, two bacteriopheophytins, two ubiquinones, one iron, and two highly hydrophobic polypeptide chains (designated L and M).

It is found in the cell membrane. The reaction center is a membrane-bound complex that mediates the initial photochemical event in the electron transfer process of photosynthesis. This chain is Reaction center protein L chain (pufL), found in Chloroflexus aurantiacus (strain ATCC 29366 / DSM 635 / J-10-fl).